Consider the following 392-residue polypeptide: Anhydro-N-acetylmuramic acid kinase (392 aa).

ATP is bound at residue 19-26 (GTSVDGID).

The protein belongs to the anhydro-N-acetylmuramic acid kinase family.

The enzyme catalyses 1,6-anhydro-N-acetyl-beta-muramate + ATP + H2O = N-acetyl-D-muramate 6-phosphate + ADP + H(+). Its pathway is amino-sugar metabolism; 1,6-anhydro-N-acetylmuramate degradation. It participates in cell wall biogenesis; peptidoglycan recycling. Functionally, catalyzes the specific phosphorylation of 1,6-anhydro-N-acetylmuramic acid (anhMurNAc) with the simultaneous cleavage of the 1,6-anhydro ring, generating MurNAc-6-P. Is required for the utilization of anhMurNAc either imported from the medium or derived from its own cell wall murein, and thus plays a role in cell wall recycling. This Trichormus variabilis (strain ATCC 29413 / PCC 7937) (Anabaena variabilis) protein is Anhydro-N-acetylmuramic acid kinase.